Reading from the N-terminus, the 163-residue chain is Nucleotide-binding protein RBAM_011030 (163 aa).

Belongs to the YajQ family.

Nucleotide-binding protein. The sequence is that of Nucleotide-binding protein RBAM_011030 from Bacillus velezensis (strain DSM 23117 / BGSC 10A6 / LMG 26770 / FZB42) (Bacillus amyloliquefaciens subsp. plantarum).